The primary structure comprises 309 residues: Nudix hydrolase 14, chloroplastic (309 aa).

The N-terminal 60 residues, 1–60 (MAGFTLLPSRLLAFPSRALPRRLHHHHAKLILRCKMSSSSSSLTQSITLPSQPNEPVLVS), are a transit peptide targeting the chloroplast. Positions 139-292 (ARGPAVAVLI…KVLMSIGLYE (154 aa)) constitute a Nudix hydrolase domain. The Nudix box signature appears at 179–200 (MLDDDKGDFVGTAVREVEEEIG). The Mg(2+) site is built by E194 and E198.

The protein belongs to the Nudix hydrolase family. As to quaternary structure, homodimer. Mg(2+) is required as a cofactor. Requires Mn(2+) as cofactor. Expressed in roots, leaves, stems and inflorescences.

It is found in the plastid. Its subcellular location is the chloroplast. The catalysed reaction is ADP-sugar + H2O = AMP + alpha-D-aldose 1-phosphate.. Its function is as follows. Mediates the hydrolysis of some nucleoside diphosphate derivatives. Can use ADP-glucose, ADP-mannose and ADP-ribose as substrates. Regulates the intracellular ADP-glucose levels linked to starch biosynthesis. The polypeptide is Nudix hydrolase 14, chloroplastic (NUDT14) (Arabidopsis thaliana (Mouse-ear cress)).